The sequence spans 305 residues: Glycine--tRNA ligase alpha subunit (305 aa).

This sequence belongs to the class-II aminoacyl-tRNA synthetase family. Tetramer of two alpha and two beta subunits.

It is found in the cytoplasm. It carries out the reaction tRNA(Gly) + glycine + ATP = glycyl-tRNA(Gly) + AMP + diphosphate. The polypeptide is Glycine--tRNA ligase alpha subunit (Streptococcus pyogenes serotype M49 (strain NZ131)).